A 282-amino-acid polypeptide reads, in one-letter code: Armadillo repeat-containing protein 1 (282 aa).

Position 1 is an N-acetylmethionine (M1). The stretch at 39–81 is one ARM repeat; it reads GCLPGLILFMDHPNPPVVHSALLALRYLAECRANREKMKGELG. T137 is subject to Phosphothreonine. Phosphoserine is present on residues S189, S246, S260, and S267. The interval 239-261 is disordered; that stretch reads DYLPEDESPTKEQDKAVSRVGSH. Positions 246–255 are enriched in basic and acidic residues; sequence SPTKEQDKAV.

In terms of assembly, interacts with mitochondrial contact site and cristae organizing system (MICOS) complex components IMMT/MIC60 and MICOS10/MIC10. Interacts with mitochondrial outer membrane sorting assembly machinery (SAM) complex components SAMM50 and MTX1.

Its subcellular location is the cytoplasm. The protein resides in the mitochondrion. The protein localises to the mitochondrion outer membrane. In association with mitochondrial contact site and cristae organizing system (MICOS) complex components and mitochondrial outer membrane sorting assembly machinery (SAM) complex components may regulate mitochondrial dynamics playing a role in determining mitochondrial length, distribution and motility. This chain is Armadillo repeat-containing protein 1 (Armc1), found in Mus musculus (Mouse).